The chain runs to 261 residues: Cytochrome c oxidase subunit 3 (261 aa).

Topologically, residues 1-15 (MAHQSHAYHMVKPSP) are mitochondrial matrix. A helical membrane pass occupies residues 16-34 (WPLTGALSALLTTSGLTMW). Topologically, residues 35–40 (FHFHST) are mitochondrial intermembrane. The helical transmembrane segment at 41-66 (TLLLTGLLTNALTMYQWWRDVVREST) threads the bilayer. At 67-72 (YQGHHT) the chain is on the mitochondrial matrix side. A helical transmembrane segment spans residues 73–105 (LPVQKGLRYGMILFITSEVFFFAGFFWAFYHSS). At 106 to 128 (LAPTPQLGGHWPPTGIIPLNPLE) the chain is on the mitochondrial intermembrane side. Residues 129–152 (VPLLNTSVLLASGVSITWAHHSLM) form a helical membrane-spanning segment. Over 153 to 155 (ENN) the chain is Mitochondrial matrix. A helical transmembrane segment spans residues 156–183 (RTQMIQALLITILLGIYFTLLQASEYIE). The Mitochondrial intermembrane portion of the chain corresponds to 184–190 (APFTISD). The helical transmembrane segment at 191–223 (GIYGSTFFMATGFHGLHVIIGSTFLTVCLARQL) threads the bilayer. Residues 224 to 232 (LFHFTSKHH) are Mitochondrial matrix-facing. The helical transmembrane segment at 233–256 (FGFEAAAWYWHFVDVVWLFLYVSI) threads the bilayer. At 257-261 (YWWGS) the chain is on the mitochondrial intermembrane side.

It belongs to the cytochrome c oxidase subunit 3 family. Component of the cytochrome c oxidase (complex IV, CIV), a multisubunit enzyme composed of 14 subunits. The complex is composed of a catalytic core of 3 subunits MT-CO1, MT-CO2 and MT-CO3, encoded in the mitochondrial DNA, and 11 supernumerary subunits COX4I, COX5A, COX5B, COX6A, COX6B, COX6C, COX7A, COX7B, COX7C, COX8 and NDUFA4, which are encoded in the nuclear genome. The complex exists as a monomer or a dimer and forms supercomplexes (SCs) in the inner mitochondrial membrane with NADH-ubiquinone oxidoreductase (complex I, CI) and ubiquinol-cytochrome c oxidoreductase (cytochrome b-c1 complex, complex III, CIII), resulting in different assemblies (supercomplex SCI(1)III(2)IV(1) and megacomplex MCI(2)III(2)IV(2)).

It is found in the mitochondrion inner membrane. The enzyme catalyses 4 Fe(II)-[cytochrome c] + O2 + 8 H(+)(in) = 4 Fe(III)-[cytochrome c] + 2 H2O + 4 H(+)(out). Functionally, component of the cytochrome c oxidase, the last enzyme in the mitochondrial electron transport chain which drives oxidative phosphorylation. The respiratory chain contains 3 multisubunit complexes succinate dehydrogenase (complex II, CII), ubiquinol-cytochrome c oxidoreductase (cytochrome b-c1 complex, complex III, CIII) and cytochrome c oxidase (complex IV, CIV), that cooperate to transfer electrons derived from NADH and succinate to molecular oxygen, creating an electrochemical gradient over the inner membrane that drives transmembrane transport and the ATP synthase. Cytochrome c oxidase is the component of the respiratory chain that catalyzes the reduction of oxygen to water. Electrons originating from reduced cytochrome c in the intermembrane space (IMS) are transferred via the dinuclear copper A center (CU(A)) of subunit 2 and heme A of subunit 1 to the active site in subunit 1, a binuclear center (BNC) formed by heme A3 and copper B (CU(B)). The BNC reduces molecular oxygen to 2 water molecules using 4 electrons from cytochrome c in the IMS and 4 protons from the mitochondrial matrix. This chain is Cytochrome c oxidase subunit 3 (MT-CO3), found in Pongo abelii (Sumatran orangutan).